The chain runs to 318 residues: Ribose-phosphate pyrophosphokinase 3 (318 aa).

Position 96-101 (arginine 96–aspartate 101) interacts with ATP. Mg(2+) contacts are provided by aspartate 128, histidine 130, aspartate 139, and aspartate 143. Histidine 130 is a binding site for ATP. Residues asparagine 212 to valine 227 are binding of phosphoribosylpyrophosphate.

The protein belongs to the ribose-phosphate pyrophosphokinase family. In terms of assembly, homodimer. The active form is probably a hexamer composed of 3 homodimers. Requires Mg(2+) as cofactor. As to expression, testis.

It carries out the reaction D-ribose 5-phosphate + ATP = 5-phospho-alpha-D-ribose 1-diphosphate + AMP + H(+). Its pathway is metabolic intermediate biosynthesis; 5-phospho-alpha-D-ribose 1-diphosphate biosynthesis; 5-phospho-alpha-D-ribose 1-diphosphate from D-ribose 5-phosphate (route I): step 1/1. With respect to regulation, activated by magnesium and inorganic phosphate. In terms of biological role, catalyzes the synthesis of phosphoribosylpyrophosphate (PRPP) that is essential for nucleotide synthesis. The polypeptide is Ribose-phosphate pyrophosphokinase 3 (PRPS1L1) (Homo sapiens (Human)).